The chain runs to 901 residues: Protein translocase subunit SecA (901 aa).

ATP contacts are provided by residues Q87, 105–109 (GEGKT), and D512. The interval 859 to 901 (HQDDDSAAAAALAAQTGERKVGRNDPCPCGSGKKYKQCHGRLQ) is disordered. The Zn(2+) site is built by C885, C887, C896, and H897. Positions 891-901 (KKYKQCHGRLQ) are enriched in basic residues.

The protein belongs to the SecA family. In terms of assembly, monomer and homodimer. Part of the essential Sec protein translocation apparatus which comprises SecA, SecYEG and auxiliary proteins SecDF-YajC and YidC. Requires Zn(2+) as cofactor.

It is found in the cell inner membrane. Its subcellular location is the cytoplasm. The catalysed reaction is ATP + H2O + cellular proteinSide 1 = ADP + phosphate + cellular proteinSide 2.. Part of the Sec protein translocase complex. Interacts with the SecYEG preprotein conducting channel. Has a central role in coupling the hydrolysis of ATP to the transfer of proteins into and across the cell membrane, serving both as a receptor for the preprotein-SecB complex and as an ATP-driven molecular motor driving the stepwise translocation of polypeptide chains across the membrane. The protein is Protein translocase subunit SecA of Escherichia coli (strain 55989 / EAEC).